We begin with the raw amino-acid sequence, 334 residues long: Mucin-15 (334 aa).

The signal sequence occupies residues 1-23 (MLALAKILLISTLFYSLLSGSHG). Topologically, residues 24 to 236 (KENQDINTTQ…SDPQKENRNT (213 aa)) are extracellular. N-linked (GlcNAc...) asparagine glycans are attached at residues Asn30, Asn61, Asn79, Asn90, Asn148, Asn155, Asn163, Asn218, and Asn225. Residues 64–104 (TSNLKASHSPPLNLPNNSHGITDFSSNSSAEHSLGSLKPTS) form a disordered region. Over residues 77 to 94 (LPNNSHGITDFSSNSSAE) the composition is skewed to polar residues. A helical transmembrane segment spans residues 237-257 (GIVFGAILGAILGVSLLTLVG). The Cytoplasmic portion of the chain corresponds to 258 to 334 (YLLCGKRKTD…DDIPPLRTSV (77 aa)). Positions 304–334 (PTLNDSAMPESEENARDGIPMDDIPPLRTSV) are disordered.

Post-translationally, highly glycosylated (N- and O-linked carbohydrates). As to expression, expressed in spleen, thymus, prostate, testis, ovary, small intestine, colon, peripheral blood leukocyte, bone marrow, lymph node and lung.

It localises to the cell membrane. The protein resides in the secreted. May play a role in the cell adhesion to the extracellular matrix. The sequence is that of Mucin-15 (MUC15) from Homo sapiens (Human).